Consider the following 433-residue polypeptide: Agnestins efflux protein AgnL12 (433 aa).

2 stretches are compositionally biased toward polar residues: residues 1–10 (MSRSTSTELQ) and 25–40 (SIAS…PPST). The interval 1 to 40 (MSRSTSTELQQELPASKEVPPDPTSIASSETASGSKPPST) is disordered. Transmembrane regions (helical) follow at residues 47–67 (ILVL…TNAF), 87–107 (ISWI…ISGY), 116–136 (LLIC…SLST), 141–161 (IFLT…LPAM), 174–194 (LAMG…PIAL), 205–225 (WTVR…CLAI), 248–268 (VMIF…SPFF), 285–305 (FYMV…PGLI), 309–329 (VGNY…ACCW), 335–355 (VGGI…VISL), 370–390 (GVAM…GTPI), and 401–421 (LGLS…ILLA).

It belongs to the major facilitator superfamily. Monocarboxylate porter (TC 2.A.1.13) family.

The protein resides in the cell membrane. Its function is as follows. Efflux pump that may be involved in the secretion of agnestins, dihydroxy-xanthone metabolites. The protein is Agnestins efflux protein AgnL12 of Paecilomyces divaricatus (Penicillium divaricatum).